The following is a 581-amino-acid chain: Proline--tRNA ligase (581 aa).

The protein belongs to the class-II aminoacyl-tRNA synthetase family. ProS type 1 subfamily. In terms of assembly, homodimer.

It localises to the cytoplasm. It carries out the reaction tRNA(Pro) + L-proline + ATP = L-prolyl-tRNA(Pro) + AMP + diphosphate. In terms of biological role, catalyzes the attachment of proline to tRNA(Pro) in a two-step reaction: proline is first activated by ATP to form Pro-AMP and then transferred to the acceptor end of tRNA(Pro). As ProRS can inadvertently accommodate and process non-cognate amino acids such as alanine and cysteine, to avoid such errors it has two additional distinct editing activities against alanine. One activity is designated as 'pretransfer' editing and involves the tRNA(Pro)-independent hydrolysis of activated Ala-AMP. The other activity is designated 'posttransfer' editing and involves deacylation of mischarged Ala-tRNA(Pro). The misacylated Cys-tRNA(Pro) is not edited by ProRS. This Verminephrobacter eiseniae (strain EF01-2) protein is Proline--tRNA ligase.